The primary structure comprises 494 residues: DNA-directed DNA/RNA polymerase mu (494 aa).

Residues 1-24 (MLPKRRRARVGSPSGDAASSTPPS) are disordered. Phosphoserine is present on Ser12. Positions 22 to 122 (PPSTRFPGVA…QPVPVECRHR (101 aa)) constitute a BRCT domain. The segment at 323–332 (RGKLQGHDVD) is involved in ssDNA binding. Asp330, Asp332, and Asp418 together coordinate Mg(2+).

Belongs to the DNA polymerase type-X family. Requires Mg(2+) as cofactor. Expressed in a number of tissues. Abundant in thymus.

It is found in the nucleus. The enzyme catalyses DNA(n) + a 2'-deoxyribonucleoside 5'-triphosphate = DNA(n+1) + diphosphate. Functionally, gap-filling polymerase involved in repair of DNA double-strand breaks by non-homologous end joining (NHEJ). Participates in immunoglobulin (Ig) light chain gene rearrangement in V(D)J recombination. The polypeptide is DNA-directed DNA/RNA polymerase mu (POLM) (Homo sapiens (Human)).